The chain runs to 355 residues: UDP-N-acetylglucosamine--N-acetylmuramyl-(pentapeptide) pyrophosphoryl-undecaprenol N-acetylglucosamine transferase (355 aa).

UDP-N-acetyl-alpha-D-glucosamine is bound by residues 15–17 (TGG), N127, R163, S191, I244, 263–268 (ALTVSE), and Q288.

This sequence belongs to the glycosyltransferase 28 family. MurG subfamily.

Its subcellular location is the cell inner membrane. The catalysed reaction is di-trans,octa-cis-undecaprenyl diphospho-N-acetyl-alpha-D-muramoyl-L-alanyl-D-glutamyl-meso-2,6-diaminopimeloyl-D-alanyl-D-alanine + UDP-N-acetyl-alpha-D-glucosamine = di-trans,octa-cis-undecaprenyl diphospho-[N-acetyl-alpha-D-glucosaminyl-(1-&gt;4)]-N-acetyl-alpha-D-muramoyl-L-alanyl-D-glutamyl-meso-2,6-diaminopimeloyl-D-alanyl-D-alanine + UDP + H(+). Its pathway is cell wall biogenesis; peptidoglycan biosynthesis. Functionally, cell wall formation. Catalyzes the transfer of a GlcNAc subunit on undecaprenyl-pyrophosphoryl-MurNAc-pentapeptide (lipid intermediate I) to form undecaprenyl-pyrophosphoryl-MurNAc-(pentapeptide)GlcNAc (lipid intermediate II). The sequence is that of UDP-N-acetylglucosamine--N-acetylmuramyl-(pentapeptide) pyrophosphoryl-undecaprenol N-acetylglucosamine transferase from Salmonella choleraesuis (strain SC-B67).